The primary structure comprises 416 residues: Lipase (416 aa).

The N-terminal stretch at 1–28 (MKCCRIMFVLLGLWFVFGLSVPGGRTEA) is a signal peptide. The active-site Nucleophile is Ser-141. Gly-314 is a binding site for Ca(2+). Asp-345 serves as the catalytic Charge relay system. Asp-385 serves as a coordination point for Ca(2+). His-386 (charge relay system) is an active-site residue. Positions 388, 393, and 394 each coordinate Ca(2+).

This sequence belongs to the AB hydrolase superfamily. In terms of assembly, homodimer.

The protein resides in the secreted. The enzyme catalyses a triacylglycerol + H2O = a diacylglycerol + a fatty acid + H(+). Activity is inhibited by zinc and iron ions, and activated in vitro in 25% v/v DMSO and acetone. Triacylglycerol hydrolase that shows hydrolysis preference towards some of the natural oils such as olive, sunflower and corn oils. The chain is Lipase from Bacillus sp.